The chain runs to 419 residues: D-amino acid dehydrogenase (419 aa).

An FAD-binding site is contributed by 3 to 17 (VLVLGAGVAGVSSVW).

This sequence belongs to the DadA oxidoreductase family. It depends on FAD as a cofactor.

It catalyses the reaction a D-alpha-amino acid + A + H2O = a 2-oxocarboxylate + AH2 + NH4(+). The protein operates within amino-acid degradation; D-alanine degradation; NH(3) and pyruvate from D-alanine: step 1/1. Functionally, oxidative deamination of D-amino acids. In Neisseria gonorrhoeae (strain ATCC 700825 / FA 1090), this protein is D-amino acid dehydrogenase.